The primary structure comprises 148 residues: UPF0178 protein EF_0842 (148 aa).

It belongs to the UPF0178 family.

This is UPF0178 protein EF_0842 from Enterococcus faecalis (strain ATCC 700802 / V583).